A 341-amino-acid chain; its full sequence is Protein pelota homolog (341 aa).

The protein belongs to the eukaryotic release factor 1 family. Pelota subfamily. As to quaternary structure, monomer. The cofactor is a divalent metal cation.

Its subcellular location is the cytoplasm. Functionally, may function in recognizing stalled ribosomes, interact with stem-loop structures in stalled mRNA molecules, and effect endonucleolytic cleavage of the mRNA. May play a role in the release non-functional ribosomes and degradation of damaged mRNAs. Has endoribonuclease activity. The protein is Protein pelota homolog of Methanoculleus marisnigri (strain ATCC 35101 / DSM 1498 / JR1).